We begin with the raw amino-acid sequence, 250 residues long: Sulfate transporter CysZ (250 aa).

The next 4 helical transmembrane spans lie at 27-47 (FVVL…YYLF), 64-84 (FLSW…LATF), 150-170 (FLLL…WFLF), and 210-230 (MLVA…PVAV).

Belongs to the CysZ family.

The protein resides in the cell inner membrane. Functionally, high affinity, high specificity proton-dependent sulfate transporter, which mediates sulfate uptake. Provides the sulfur source for the cysteine synthesis pathway. The polypeptide is Sulfate transporter CysZ (Vibrio cholerae serotype O1 (strain ATCC 39315 / El Tor Inaba N16961)).